The primary structure comprises 586 residues: Penicillin-binding protein activator LpoA (586 aa).

Positions 1 to 26 are cleaved as a signal peptide; sequence MLSILMQGLRLKKCFLPILVMFFLAG. The N-palmitoyl cysteine moiety is linked to residue C27. C27 carries S-diacylglycerol cysteine lipidation.

The protein belongs to the LpoA family. Interacts with PBP1a.

It is found in the cell outer membrane. Functionally, regulator of peptidoglycan synthesis that is essential for the function of penicillin-binding protein 1A (PBP1a). This is Penicillin-binding protein activator LpoA from Histophilus somni (strain 2336) (Haemophilus somnus).